Reading from the N-terminus, the 543-residue chain is Nucleoside-triphosphatase ntp-1 (543 aa).

A helical transmembrane segment spans residues 40 to 60; sequence VYGFLLTCTCLLLILTIIPMS. The Proton acceptor role is filled by Glu212. Residues 497-517 traverse the membrane as a helical segment; that stretch reads QISNFFSFFVILIIVLAVALY.

Belongs to the GDA1/CD39 NTPase family.

It is found in the golgi apparatus membrane. The catalysed reaction is a ribonucleoside 5'-triphosphate + H2O = a ribonucleoside 5'-diphosphate + phosphate + H(+). Its function is as follows. Seems to be able to hydrolyze CTP, ATP and UTP. The protein is Nucleoside-triphosphatase ntp-1 of Caenorhabditis elegans.